The sequence spans 567 residues: uncharacterized protein (567 aa).

Helical transmembrane passes span 20–40 (FTIL…SGVL), 69–89 (SLET…SVFI), 95–115 (AYLT…VALI), 126–146 (ILLN…FMCL), 168–188 (IPLV…YLLF), and 528–548 (IFGS…LLAI).

Its subcellular location is the cell membrane. This is an uncharacterized protein from Escherichia coli (strain K12).